A 506-amino-acid polypeptide reads, in one-letter code: MKEYRVYLERARSRQQDFLYPLIFREYIYGLAYSHNFNRSIFVENGGYDNKYSLLNVKRLITRMYQQNHLIISTNDSNKNPFLGYNKNFYSQIISEGFAIVVEIPFFLQLSSSLEEAEIIKSYKNVRSIHSIFPFLEDKFTYLNYVSDIRIPYPIHLEILVQILRYWVKDVPLFHLLRLFLYDFCNWNCFTPTKKSISTFSKSNPRLFLFLYNFYVCEYESIFLFLRNKSSHLRLKSFSVFFERIFFYAKREHLVEVFSKDFSYTLPFFKDPNIHYVRYQGKCILASKNVPFLMNKWKHYFIHLWQCFFDVWSQPRTIDINQLSEHSFQLLGYFSNVRLNRSVVRSQMLENTFLIEIVSKKLDIIVPIIPLIRSLAKAKFCNVLGHPISKPVWADSSDFDIIERFLRICRNLSHYYNGSSKKKSLYRIKYILRLSCIKTLACKHKSTVRAFLKRSGSEELLEEFFTEEEEILSLIFPRDSFTLHRFHRNRIWYLDILFSNDLVNDE.

The protein belongs to the intron maturase 2 family. MatK subfamily.

It localises to the plastid. Its subcellular location is the chloroplast. Usually encoded in the trnK tRNA gene intron. Probably assists in splicing its own and other chloroplast group II introns. This is Maturase K from Trifolium resupinatum (Persian clover).